Reading from the N-terminus, the 248-residue chain is Adenosylcobinamide-GDP ribazoletransferase (248 aa).

7 helical membrane-spanning segments follow: residues 32-52, 60-80, 103-123, 134-154, 170-190, 195-215, and 227-247; these read FPLVGLLLGLLQAALAWIGMV, ALLVLLSGVLLTRAIHADGLA, AVGSFGVIALILLFLFKWIAL, WIVSGIVLARFVQVVLASVMT, AGGWHVVVAALFSLLILVLVM, LPIVVALLATAVSGSLTGMLA, and LGASSEMTEALVWCSALLLLF.

Belongs to the CobS family. The cofactor is Mg(2+).

The protein localises to the cell inner membrane. The enzyme catalyses alpha-ribazole + adenosylcob(III)inamide-GDP = adenosylcob(III)alamin + GMP + H(+). It carries out the reaction alpha-ribazole 5'-phosphate + adenosylcob(III)inamide-GDP = adenosylcob(III)alamin 5'-phosphate + GMP + H(+). Its pathway is cofactor biosynthesis; adenosylcobalamin biosynthesis; adenosylcobalamin from cob(II)yrinate a,c-diamide: step 7/7. Joins adenosylcobinamide-GDP and alpha-ribazole to generate adenosylcobalamin (Ado-cobalamin). Also synthesizes adenosylcobalamin 5'-phosphate from adenosylcobinamide-GDP and alpha-ribazole 5'-phosphate. The chain is Adenosylcobinamide-GDP ribazoletransferase from Prosthecochloris aestuarii (strain DSM 271 / SK 413).